The primary structure comprises 276 residues: Potassium/proton antiporter CemA (276 aa).

3 helical membrane passes run 59–79 (LLLLILIPVLVNQMSKSWIFG), 199–219 (FFIILFTDMFIGFHSPHGWEV), and 236–256 (FIFLFIATFPVALDTVFKYWI).

The protein belongs to the CemA family.

It is found in the plastid. The protein resides in the chloroplast inner membrane. The catalysed reaction is K(+)(in) + H(+)(out) = K(+)(out) + H(+)(in). Its function is as follows. Contributes to K(+)/H(+) antiport activity by supporting proton efflux to control proton extrusion and homeostasis in chloroplasts in a light-dependent manner to modulate photosynthesis. Prevents excessive induction of non-photochemical quenching (NPQ) under continuous-light conditions. Indirectly promotes efficient inorganic carbon uptake into chloroplasts. The polypeptide is Potassium/proton antiporter CemA (Cyanidioschyzon merolae (strain NIES-3377 / 10D) (Unicellular red alga)).